Reading from the N-terminus, the 274-residue chain is Large ribosomal subunit protein uL2 (274 aa).

Residues 221–274 (RGTAMNPVDHPHGGGEGRNFGKHPVTPWGVQTKGKKTRNNKRTDKSIVRRRSKK) are disordered.

It belongs to the universal ribosomal protein uL2 family. In terms of assembly, part of the 50S ribosomal subunit. Forms a bridge to the 30S subunit in the 70S ribosome.

Its function is as follows. One of the primary rRNA binding proteins. Required for association of the 30S and 50S subunits to form the 70S ribosome, for tRNA binding and peptide bond formation. It has been suggested to have peptidyltransferase activity; this is somewhat controversial. Makes several contacts with the 16S rRNA in the 70S ribosome. This chain is Large ribosomal subunit protein uL2, found in Hamiltonella defensa subsp. Acyrthosiphon pisum (strain 5AT).